Here is a 168-residue protein sequence, read N- to C-terminus: Shikimate kinase (168 aa).

12-17 (GAGKST) contributes to the ATP binding site. Ser16 serves as a coordination point for Mg(2+). Substrate-binding residues include Asp34, Arg58, and Gly80. Residue Arg117 participates in ATP binding. Substrate is bound at residue Arg136. An ATP-binding site is contributed by Arg153.

Belongs to the shikimate kinase family. As to quaternary structure, monomer. Requires Mg(2+) as cofactor.

The protein resides in the cytoplasm. It catalyses the reaction shikimate + ATP = 3-phosphoshikimate + ADP + H(+). It participates in metabolic intermediate biosynthesis; chorismate biosynthesis; chorismate from D-erythrose 4-phosphate and phosphoenolpyruvate: step 5/7. In terms of biological role, catalyzes the specific phosphorylation of the 3-hydroxyl group of shikimic acid using ATP as a cosubstrate. The chain is Shikimate kinase from Rhodococcus jostii (strain RHA1).